A 115-amino-acid polypeptide reads, in one-letter code: Tail tip protein M (115 aa).

The protein belongs to the lambda-like tail tip protein M family.

The protein resides in the virion. It localises to the host cytoplasm. In terms of biological role, part of the distal tail tip which plays a role in DNA ejection during entry, and in tail assembly initiation during exit. May bind tail tip complex associated with tape measure protein and allow tail tube protein polymerization on top of tail tip. The polypeptide is Tail tip protein M (Escherichia coli (Bacteriophage N15)).